The chain runs to 499 residues: Probable cytosol aminopeptidase (499 aa).

Residues lysine 269 and aspartate 274 each contribute to the Mn(2+) site. The active site involves lysine 281. Aspartate 292, aspartate 351, and glutamate 353 together coordinate Mn(2+). Arginine 355 is an active-site residue.

Belongs to the peptidase M17 family. Mn(2+) serves as cofactor.

It is found in the cytoplasm. The enzyme catalyses Release of an N-terminal amino acid, Xaa-|-Yaa-, in which Xaa is preferably Leu, but may be other amino acids including Pro although not Arg or Lys, and Yaa may be Pro. Amino acid amides and methyl esters are also readily hydrolyzed, but rates on arylamides are exceedingly low.. It carries out the reaction Release of an N-terminal amino acid, preferentially leucine, but not glutamic or aspartic acids.. Presumably involved in the processing and regular turnover of intracellular proteins. Catalyzes the removal of unsubstituted N-terminal amino acids from various peptides. This Actinobacillus pleuropneumoniae serotype 7 (strain AP76) protein is Probable cytosol aminopeptidase.